Reading from the N-terminus, the 425-residue chain is Queuine tRNA-ribosyltransferase accessory subunit 2 (425 aa).

The segment at 302-323 is disordered; it reads QNGAQDLEKNSPEEDQEEEVVK. Zn(2+)-binding residues include C351, C353, C356, and H382.

It belongs to the queuine tRNA-ribosyltransferase family. QTRT2 subfamily. Heterodimer of a catalytic subunit QTRT1 and an accessory subunit QTRT2. The cofactor is Zn(2+).

It is found in the cytoplasm. It localises to the mitochondrion outer membrane. In terms of biological role, non-catalytic subunit of the queuine tRNA-ribosyltransferase (TGT) that catalyzes the base-exchange of a guanine (G) residue with queuine (Q) at position 34 (anticodon wobble position) in tRNAs with GU(N) anticodons (tRNA-Asp, -Asn, -His and -Tyr), resulting in the hypermodified nucleoside queuosine (7-(((4,5-cis-dihydroxy-2-cyclopenten-1-yl)amino)methyl)-7-deazaguanosine). The sequence is that of Queuine tRNA-ribosyltransferase accessory subunit 2 from Gallus gallus (Chicken).